The sequence spans 392 residues: Type III polyketide synthase B (392 aa).

57–64 (KLTRLCKT) contributes to the CoA binding site. Cys166 functions as the Nucleophile in the catalytic mechanism. 218–219 (GD) contacts substrate. Residues Leu269, 309-312 (GGPA), and Ala312 contribute to the CoA site.

The protein belongs to the thiolase-like superfamily. Chalcone/stilbene synthases family. As to quaternary structure, homodimer. Interacts with 4CLL1/ACOS5 and TKPR1. In terms of tissue distribution, expressed in flowers and flower buds (at protein level). Mostly confined to anther tapetal cells.

The protein localises to the endoplasmic reticulum. It functions in the pathway secondary metabolite biosynthesis; flavonoid biosynthesis. Plant type III polyketide synthases (PKSs) that catalyzes the condensation of malonyl-CoA units with various CoA ester starter molecules to generate a diverse array of natural products including long-chain alkyl alpha-pyrones. Accepts up to C(20) chain-length fatty acyl CoAs as starter substrates, and carries out sequential condensations with malonyl-CoA to produce triketide and tetraketide alpha-pyrones, potential sporopollenin precursors. Favorite substrates for are midchain- and v-hydroxylated fatty acyl-CoAs (e.g. 12-hydroxyoctadecanoyl-CoA and 16-hydroxyhexadecanoyl-CoA). Required for pollen development and sporopollenin biosynthesis, the major constituent of exine in the outer pollen wall. In vitro, can use 4-coumaroyl-coenzyme A as substrate to produce bis-noryangonin and fatty acyl-coenzyme A as substrate to produce medium-chain alkyl pyrones. May play a role in both the synthesis of pollen fatty acids and phenolics found in exine. The protein is Type III polyketide synthase B of Arabidopsis thaliana (Mouse-ear cress).